We begin with the raw amino-acid sequence, 178 residues long: Large ribosomal subunit protein uL5 (178 aa).

The protein belongs to the universal ribosomal protein uL5 family. As to quaternary structure, part of the 50S ribosomal subunit; contacts the 5S rRNA and probably tRNA. Forms a bridge to the 30S subunit in the 70S ribosome.

This is one of the proteins that bind and probably mediate the attachment of the 5S RNA into the large ribosomal subunit, where it forms part of the central protuberance. In the 70S ribosome it contacts protein S13 of the 30S subunit (bridge B1b), connecting the 2 subunits; this bridge is implicated in subunit movement. May contact the P site tRNA; the 5S rRNA and some of its associated proteins might help stabilize positioning of ribosome-bound tRNAs. This chain is Large ribosomal subunit protein uL5, found in Archaeoglobus fulgidus (strain ATCC 49558 / DSM 4304 / JCM 9628 / NBRC 100126 / VC-16).